A 135-amino-acid chain; its full sequence is ATP synthase epsilon chain (135 aa).

This sequence belongs to the ATPase epsilon chain family. F-type ATPases have 2 components, CF(1) - the catalytic core - and CF(0) - the membrane proton channel. CF(1) has five subunits: alpha(3), beta(3), gamma(1), delta(1), epsilon(1). CF(0) has three main subunits: a, b and c.

It localises to the cell inner membrane. Functionally, produces ATP from ADP in the presence of a proton gradient across the membrane. The sequence is that of ATP synthase epsilon chain from Rhizobium johnstonii (strain DSM 114642 / LMG 32736 / 3841) (Rhizobium leguminosarum bv. viciae).